We begin with the raw amino-acid sequence, 269 residues long: Proline-rich protein 7 (269 aa).

The Extracellular portion of the chain corresponds to 1–9 (MVMSQGTYT). Positions 1-44 (MVMSQGTYTFLTCFAGFWLIWGLIVLLCCFCSFLRRRLKRRQEE) are required for interaction with NMDA receptors. The tract at residues 2 to 39 (VMSQGTYTFLTCFAGFWLIWGLIVLLCCFCSFLRRRLK) is required for membrane localization. Residues 10–30 (FLTCFAGFWLIWGLIVLLCCF) form a helical; Signal-anchor for type III membrane protein membrane-spanning segment. The Cytoplasmic segment spans residues 31–269 (CSFLRRRLKR…IPLFGRTTAV (239 aa)). Disordered regions lie at residues 63–83 (GSLAGSPPGLAPPPPPHRSRL) and 97–121 (PLLHHGPAPPHAHPHPHHHALPHPP). Residue serine 64 is modified to Phosphoserine. The segment covering 108 to 117 (AHPHPHHHAL) has biased composition (basic residues). Positions 146–166 (PCYEEAVLMAEPPPPYSEVLT) are required for internalization. The required for apoptosis induction stretch occupies residues 146-269 (PCYEEAVLMA…IPLFGRTTAV (124 aa)). The PDZ-binding motif lies at 267–269 (TAV).

In terms of assembly, forms a complex with NMDA receptor zeta subunit GRIN1 and epsilon subunit GRIN2B. Interacts with GRIN2B. Interacts with GRIN1; the interaction is reduced upon NMDA receptor activity. Found in a postsynaptic membrane complex with DLG4 and GRIN1. Interacts with DLG4 (via PDZ3 domain and to lesser degree via PDZ2 domain). Interacts with JUN. Found in a complex with JUN and FBXW7. Interacts with JUN and FBXW7; the interaction inhibits ubiquitination-mediated JUN degradation promoting its phosphorylation and transcriptional activity. Interacts with SRC. Post-translationally, palmitoylated. Tyrosine phosphorylated, possibly by SRC. Highly expressed in brain, moderately expressed in lymph nodes and T cells and low expression in thymus and spleen. Expressed in single positive progenitor thymocytes, particularly in CD8 single positive thymocytes.

The protein resides in the cell membrane. It localises to the postsynaptic cell membrane. It is found in the postsynaptic density membrane. The protein localises to the cytoplasm. Its subcellular location is the perinuclear region. The protein resides in the synapse. It localises to the cell projection. It is found in the dendrite. The protein localises to the nucleus. Acts as a synapse-to-nucleus messenger to promote NMDA receptor-mediated excitotoxicity in neurons in a JUN-dependent manner. Inhibits ubiquitination-mediated degradation and promotes phosphorylation and transcriptional activity of transcription factor JUN. Might play a redundant role in the regulation of T cell receptor signaling. Might promote apoptosis in T cells. The protein is Proline-rich protein 7 (Prr7) of Mus musculus (Mouse).